The primary structure comprises 212 residues: Octanoyltransferase (212 aa).

Residues 34-208 (GQRQDTLILL…AFERQFNARC (175 aa)) form the BPL/LPL catalytic domain. Substrate is bound by residues 72-79 (RGGQVTYH), 139-141 (SIG), and 152-154 (GLS). Cys170 serves as the catalytic Acyl-thioester intermediate.

This sequence belongs to the LipB family.

It localises to the cytoplasm. It catalyses the reaction octanoyl-[ACP] + L-lysyl-[protein] = N(6)-octanoyl-L-lysyl-[protein] + holo-[ACP] + H(+). Its pathway is protein modification; protein lipoylation via endogenous pathway; protein N(6)-(lipoyl)lysine from octanoyl-[acyl-carrier-protein]: step 1/2. Its function is as follows. Catalyzes the transfer of endogenously produced octanoic acid from octanoyl-acyl-carrier-protein onto the lipoyl domains of lipoate-dependent enzymes. Lipoyl-ACP can also act as a substrate although octanoyl-ACP is likely to be the physiological substrate. In Magnetococcus marinus (strain ATCC BAA-1437 / JCM 17883 / MC-1), this protein is Octanoyltransferase.